The chain runs to 815 residues: Probable receptor-like protein kinase At2g39360 (815 aa).

An N-terminal signal peptide occupies residues 1–26; sequence MINLKLFLELKLCFLITLLCSSHISS. The Extracellular portion of the chain corresponds to 27 to 407; sequence VSDTFFINCG…SSSNKSSNTS (381 aa). Residues N40, N45, N125, N146, N209, N244, N277, N331, N355, N401, and N405 are each glycosylated (N-linked (GlcNAc...) asparagine). Residues 408-428 form a helical membrane-spanning segment; that stretch reads VGLIAGLSAALCVALVFGVVV. The Cytoplasmic portion of the chain corresponds to 429–815; sequence SWWCIRKRRR…FAQMVREETR (387 aa). The region spanning 487–761 is the Protein kinase domain; sequence FDESLVIGVG…GDLLWNLEFM (275 aa). Residues 493 to 501 and K515 each bind ATP; that span reads IGVGGFGKV. D612 acts as the Proton acceptor in catalysis.

The protein belongs to the protein kinase superfamily. Ser/Thr protein kinase family.

The protein resides in the cell membrane. This is Probable receptor-like protein kinase At2g39360 from Arabidopsis thaliana (Mouse-ear cress).